Consider the following 1233-residue polypeptide: ATP-dependent helicase/nuclease subunit A (1233 aa).

Residues 3 to 474 (TKWTEEQKQA…ILLYKNFRSR (472 aa)) enclose the UvrD-like helicase ATP-binding domain. Position 24-31 (24-31 (AAAGSGKT)) interacts with ATP. Residues 518 to 809 (VTGGAVELHL…RIMSIHKSKG (292 aa)) enclose the UvrD-like helicase C-terminal domain. Residues 533-555 (VEEEVEEKEEEKNEEKDFEEEEE) form a disordered region.

Belongs to the helicase family. AddA subfamily. As to quaternary structure, heterodimer of AddA and AddB/RexB. The cofactor is Mg(2+).

The enzyme catalyses Couples ATP hydrolysis with the unwinding of duplex DNA by translocating in the 3'-5' direction.. It carries out the reaction ATP + H2O = ADP + phosphate + H(+). The heterodimer acts as both an ATP-dependent DNA helicase and an ATP-dependent, dual-direction single-stranded exonuclease. Recognizes the chi site generating a DNA molecule suitable for the initiation of homologous recombination. The AddA nuclease domain is required for chi fragment generation; this subunit has the helicase and 3' -&gt; 5' nuclease activities. The polypeptide is ATP-dependent helicase/nuclease subunit A (Thermoanaerobacter pseudethanolicus (strain ATCC 33223 / 39E) (Clostridium thermohydrosulfuricum)).